Consider the following 333-residue polypeptide: Mitochondrial 2-oxoglutarate/malate carrier protein (333 aa).

Solcar repeat units follow at residues 29–127 (FRLI…LFER), 136–227 (PGFL…SKQF), and 236–325 (DNIL…MNKA). A run of 6 helical transmembrane segments spans residues 30 to 61 (RLIA…VQPL), 102 to 120 (GLSA…RLGI), 138 to 159 (FLLK…GTPA), 202 to 221 (GCIP…LASY), 241 to 259 (HFCA…SMPV), and 300 to 319 (GFTP…FIFL).

It belongs to the mitochondrial carrier (TC 2.A.29) family. In terms of assembly, interacts with SMIM26.

The protein localises to the membrane. The catalysed reaction is (S)-malate(in) + 2-oxoglutarate(out) = (S)-malate(out) + 2-oxoglutarate(in). It catalyses the reaction malonate(in) + 2-oxoglutarate(out) = malonate(out) + 2-oxoglutarate(in). The enzyme catalyses succinate(in) + 2-oxoglutarate(out) = succinate(out) + 2-oxoglutarate(in). It carries out the reaction maleate(in) + 2-oxoglutarate(out) = maleate(out) + 2-oxoglutarate(in). The catalysed reaction is oxaloacetate(in) + 2-oxoglutarate(out) = oxaloacetate(out) + 2-oxoglutarate(in). Catalyzes the transport of 2-oxoglutarate (alpha-oxoglutarate) across the inner mitochondrial membrane in an electroneutral exchange for malate. Can also exchange 2-oxoglutarate for other dicarboxylic acids such as malonate, succinate, maleate and oxaloacetate, although with lower affinity. Contributes to several metabolic processes, including the malate-aspartate shuttle, the oxoglutarate/isocitrate shuttle, in gluconeogenesis from lactate, and in nitrogen metabolism. Maintains mitochondrial fusion and fission events, and the organization and morphology of cristae. Involved in the regulation of apoptosis. Helps protect from cytotoxic-induced apoptosis by modulating glutathione levels in mitochondria. The sequence is that of Mitochondrial 2-oxoglutarate/malate carrier protein (SLC25A11) from Sus scrofa (Pig).